The sequence spans 758 residues: 3-isopropylmalate dehydratase (758 aa).

3 residues coordinate [4Fe-4S] cluster: cysteine 359, cysteine 420, and cysteine 423. Phosphoserine is present on residues serine 486 and serine 488.

The protein belongs to the aconitase/IPM isomerase family. It depends on [4Fe-4S] cluster as a cofactor.

It catalyses the reaction (2R,3S)-3-isopropylmalate = (2S)-2-isopropylmalate. Its pathway is amino-acid biosynthesis; L-leucine biosynthesis; L-leucine from 3-methyl-2-oxobutanoate: step 2/4. In terms of biological role, catalyzes the isomerization between 2-isopropylmalate and 3-isopropylmalate, via the formation of 2-isopropylmaleate. This is 3-isopropylmalate dehydratase (leu2) from Schizosaccharomyces pombe (strain 972 / ATCC 24843) (Fission yeast).